A 277-amino-acid chain; its full sequence is Digeranylgeranylglyceryl phosphate synthase (277 aa).

A run of 7 helical transmembrane segments spans residues 16-36 (ILAG…IPDI), 84-104 (ALYY…FLNI), 107-127 (FVFA…LKPL), 146-166 (GAIG…AFLV), 200-220 (AIIA…PVKV), 221-241 (GIGL…KASI), and 257-277 (LKIA…TKGV).

This sequence belongs to the UbiA prenyltransferase family. DGGGP synthase subfamily. It depends on Mg(2+) as a cofactor.

It is found in the cell membrane. The enzyme catalyses sn-3-O-(geranylgeranyl)glycerol 1-phosphate + (2E,6E,10E)-geranylgeranyl diphosphate = 2,3-bis-O-(geranylgeranyl)-sn-glycerol 1-phosphate + diphosphate. It functions in the pathway membrane lipid metabolism; glycerophospholipid metabolism. In terms of biological role, prenyltransferase that catalyzes the transfer of the geranylgeranyl moiety of geranylgeranyl diphosphate (GGPP) to the C2 hydroxyl of (S)-3-O-geranylgeranylglyceryl phosphate (GGGP). This reaction is the second ether-bond-formation step in the biosynthesis of archaeal membrane lipids. This is Digeranylgeranylglyceryl phosphate synthase from Pyrococcus furiosus (strain ATCC 43587 / DSM 3638 / JCM 8422 / Vc1).